A 510-amino-acid polypeptide reads, in one-letter code: Histidine ammonia-lyase (510 aa).

The 5-imidazolinone (Ala-Gly) cross-link spans alanine 143–glycine 145. Serine 144 bears the 2,3-didehydroalanine (Ser) mark.

This sequence belongs to the PAL/histidase family. Post-translationally, contains an active site 4-methylidene-imidazol-5-one (MIO), which is formed autocatalytically by cyclization and dehydration of residues Ala-Ser-Gly.

Its subcellular location is the cytoplasm. The enzyme catalyses L-histidine = trans-urocanate + NH4(+). It functions in the pathway amino-acid degradation; L-histidine degradation into L-glutamate; N-formimidoyl-L-glutamate from L-histidine: step 1/3. In Shewanella sediminis (strain HAW-EB3), this protein is Histidine ammonia-lyase.